Reading from the N-terminus, the 523-residue chain is Ribonuclease Y (523 aa).

The chain crosses the membrane as a helical span at residues 28–48; the sequence is TYYIVATIIIAVIAVYVDYYI. The 86-residue stretch at 227-312 folds into the KH domain; the sequence is TVYVVNLPND…EMVEKAKKEV (86 aa). Residues 353–446 enclose the HD domain; that stretch reads VLKHSIEVSY…VQAADAISAA (94 aa).

It belongs to the RNase Y family.

It is found in the cell membrane. Endoribonuclease that initiates mRNA decay. This is Ribonuclease Y from Clostridium tetani (strain Massachusetts / E88).